We begin with the raw amino-acid sequence, 513 residues long: Sterol 14-alpha demethylase (513 aa).

A helical transmembrane segment spans residues 8-28; that stretch reads AYALLAFVAIMALNVTYQFLF. N-linked (GlcNAc...) asparagine glycans are attached at residues Asn-32 and Asn-332. Cys-453 serves as a coordination point for heme.

It belongs to the cytochrome P450 family. Heme is required as a cofactor.

The protein resides in the endoplasmic reticulum membrane. It catalyses the reaction a 14alpha-methyl steroid + 3 reduced [NADPH--hemoprotein reductase] + 3 O2 = a Delta(14) steroid + formate + 3 oxidized [NADPH--hemoprotein reductase] + 4 H2O + 4 H(+). The enzyme catalyses a 14alpha-methyl steroid + reduced [NADPH--hemoprotein reductase] + O2 = a 14alpha-hydroxymethyl steroid + oxidized [NADPH--hemoprotein reductase] + H2O + H(+). It carries out the reaction a 14alpha-hydroxymethyl steroid + reduced [NADPH--hemoprotein reductase] + O2 = a 14alpha-formyl steroid + oxidized [NADPH--hemoprotein reductase] + 2 H2O + H(+). The catalysed reaction is a 14alpha-formyl steroid + reduced [NADPH--hemoprotein reductase] + O2 = a Delta(14) steroid + formate + oxidized [NADPH--hemoprotein reductase] + H2O + 2 H(+). It catalyses the reaction lanosterol + 3 reduced [NADPH--hemoprotein reductase] + 3 O2 = 4,4-dimethyl-5alpha-cholesta-8,14,24-trien-3beta-ol + formate + 3 oxidized [NADPH--hemoprotein reductase] + 4 H2O + 4 H(+). The enzyme catalyses lanosterol + reduced [NADPH--hemoprotein reductase] + O2 = 32-hydroxylanosterol + oxidized [NADPH--hemoprotein reductase] + H2O + H(+). It carries out the reaction 32-hydroxylanosterol + reduced [NADPH--hemoprotein reductase] + O2 = 32-oxolanosterol + oxidized [NADPH--hemoprotein reductase] + 2 H2O + H(+). The catalysed reaction is 32-oxolanosterol + reduced [NADPH--hemoprotein reductase] + O2 = 4,4-dimethyl-5alpha-cholesta-8,14,24-trien-3beta-ol + formate + oxidized [NADPH--hemoprotein reductase] + H2O + 2 H(+). It catalyses the reaction eburicol + 3 reduced [NADPH--hemoprotein reductase] + 3 O2 = 14-demethyleburicol + formate + 3 oxidized [NADPH--hemoprotein reductase] + 4 H2O + 4 H(+). The enzyme catalyses eburicol + reduced [NADPH--hemoprotein reductase] + O2 = 32-hydroxyeburicol + oxidized [NADPH--hemoprotein reductase] + H2O + H(+). It carries out the reaction 32-hydroxyeburicol + reduced [NADPH--hemoprotein reductase] + O2 = 32-oxoeburicol + oxidized [NADPH--hemoprotein reductase] + 2 H2O + H(+). The catalysed reaction is 32-oxoeburicol + reduced [NADPH--hemoprotein reductase] + O2 = 14-demethyleburicol + formate + oxidized [NADPH--hemoprotein reductase] + H2O + 2 H(+). It participates in steroid biosynthesis; sterol biosynthesis. In terms of biological role, sterol 14alpha-demethylase, encoded by cyp51A, cyp51B and cyp51C, that plays a critical role in the third module of ergosterol biosynthesis pathway, being ergosterol the major sterol component in fungal membranes that participates in a variety of functions. The third module or late pathway involves the ergosterol synthesis itself through consecutive reactions that mainly occur in the endoplasmic reticulum (ER) membrane. In filamentous fungi, during the initial step of this module, lanosterol (lanosta-8,24-dien-3beta-ol) can be metabolized to eburicol. Sterol 14alpha-demethylase catalyzes the three-step oxidative removal of the 14alpha-methyl group (C-32) of both these sterols in the form of formate, and converts eburicol and lanosterol to 14-demethyleburicol (4,4,24-trimethylergosta-8,14,24(28)-trienol) and 4,4-dimethyl-5alpha-cholesta-8,14,24-trien-3beta-ol, respectively, which are further metabolized by other enzymes in the pathway to ergosterol. Can also use substrates not intrinsic to fungi, such as 24,25-dihydrolanosterol (DHL), producing 4,4'-dimethyl-8,14-cholestadien-3-beta-ol, but at lower rates than the endogenous substrates. As a target of azole drugs, plays a crucial role in azole drug susceptibility. The chain is Sterol 14-alpha demethylase from Aspergillus flavus (strain ATCC 200026 / FGSC A1120 / IAM 13836 / NRRL 3357 / JCM 12722 / SRRC 167).